A 482-amino-acid chain; its full sequence is ATP synthase subunit beta (482 aa).

Residue 161–168 (GGAGVGKT) participates in ATP binding.

The protein belongs to the ATPase alpha/beta chains family. As to quaternary structure, F-type ATPases have 2 components, CF(1) - the catalytic core - and CF(0) - the membrane proton channel. CF(1) has five subunits: alpha(3), beta(3), gamma(1), delta(1), epsilon(1). CF(0) has four main subunits: a(1), b(1), b'(1) and c(9-12).

Its subcellular location is the cellular thylakoid membrane. It catalyses the reaction ATP + H2O + 4 H(+)(in) = ADP + phosphate + 5 H(+)(out). Produces ATP from ADP in the presence of a proton gradient across the membrane. The catalytic sites are hosted primarily by the beta subunits. This Microcystis aeruginosa (strain NIES-843 / IAM M-2473) protein is ATP synthase subunit beta.